We begin with the raw amino-acid sequence, 259 residues long: Tryptophan synthase alpha chain (259 aa).

Catalysis depends on proton acceptor residues Glu-42 and Asp-53.

Belongs to the TrpA family. Tetramer of two alpha and two beta chains.

It catalyses the reaction (1S,2R)-1-C-(indol-3-yl)glycerol 3-phosphate + L-serine = D-glyceraldehyde 3-phosphate + L-tryptophan + H2O. Its pathway is amino-acid biosynthesis; L-tryptophan biosynthesis; L-tryptophan from chorismate: step 5/5. Functionally, the alpha subunit is responsible for the aldol cleavage of indoleglycerol phosphate to indole and glyceraldehyde 3-phosphate. This chain is Tryptophan synthase alpha chain, found in Erythrobacter litoralis (strain HTCC2594).